The following is a 222-amino-acid chain: Charged multivesicular body protein 3 (222 aa).

G2 is lipidated: N-myristoyl glycine. Residues G2–A113 form an intramolecular interaction with C-terminus region. The stretch at K22–K54 forms a coiled coil. 2 important for autoinhibitory function regions span residues V59–A64 and I168–L169. The stretch at E149–S222 forms a coiled coil. Positions M151–L220 are intramolecular interaction with N-terminus. The interval M151–S222 is interaction with VPS4A. Residue K179 forms a Glycyl lysine isopeptide (Lys-Gly) (interchain with G-Cter in ubiquitin) linkage. The segment at A180–S222 is disordered. Interaction with STAMBP regions lie at residues A196–S222, E203–E207, and R221–S222. The residue at position 200 (S200) is a Phosphoserine. Over residues S200–L210 the composition is skewed to acidic residues. An MIT-interacting motif motif is present at residues E201–E211.

The protein belongs to the SNF7 family. As to quaternary structure, probable core component of the endosomal sorting required for transport complex III (ESCRT-III). ESCRT-III components are thought to multimerize to form a flat lattice on the perimeter membrane of the endosome. Several assembly forms of ESCRT-III may exist that interact and act sequentially. Forms a metastable monomer in solution; its core structure (without part of the putative autoinhibitory C-terminal acidic region) oligomerizes into a flat lattice via two different dimerization interfaces. In vitro, heteromerizes with CHMP2A (but not CHMP4) to form helical tubular structures that expose membrane-interacting sites on the outside whereas VPS4B can associate on the inside of the tubule. May interact with IGFBP7; the relevance of such interaction however remains unclear. Interacts with CHMP2A. Interacts with CHMP4A; the interaction requires the release of CHMP4A autoinhibition. Interacts with VPS4A. Interacts with STAMBP; the interaction appears to relieve the autoinhibition of CHMP3. Interacts with VTA1.

The protein localises to the cytoplasm. Its subcellular location is the cytosol. It is found in the membrane. It localises to the endosome. The protein resides in the late endosome membrane. In terms of biological role, probable core component of the endosomal sorting required for transport complex III (ESCRT-III) which is involved in multivesicular bodies (MVBs) formation and sorting of endosomal cargo proteins into MVBs. MVBs contain intraluminal vesicles (ILVs) that are generated by invagination and scission from the limiting membrane of the endosome and mostly are delivered to lysosomes enabling degradation of membrane proteins, such as stimulated growth factor receptors, lysosomal enzymes and lipids. The MVB pathway appears to require the sequential function of ESCRT-O, -I,-II and -III complexes. ESCRT-III proteins mostly dissociate from the invaginating membrane before the ILV is released. The ESCRT machinery also functions in topologically equivalent membrane fission events, such as the terminal stages of cytokinesis and the budding of enveloped viruses (lentiviruses). ESCRT-III proteins are believed to mediate the necessary vesicle extrusion and/or membrane fission activities, possibly in conjunction with the AAA ATPase VPS4. Selectively binds to phosphatidylinositol 3,5-bisphosphate PtdIns(3,5)P2 and PtdIns(3,4)P2 in preference to other phosphoinositides tested. Involved in late stages of cytokinesis. Plays a role in endosomal sorting/trafficking of EGF receptor. The chain is Charged multivesicular body protein 3 (CHMP3) from Bos taurus (Bovine).